We begin with the raw amino-acid sequence, 95 residues long: Co-chaperonin GroES (95 aa).

Belongs to the GroES chaperonin family. As to quaternary structure, heptamer of 7 subunits arranged in a ring. Interacts with the chaperonin GroEL.

It is found in the cytoplasm. Together with the chaperonin GroEL, plays an essential role in assisting protein folding. The GroEL-GroES system forms a nano-cage that allows encapsulation of the non-native substrate proteins and provides a physical environment optimized to promote and accelerate protein folding. GroES binds to the apical surface of the GroEL ring, thereby capping the opening of the GroEL channel. The polypeptide is Co-chaperonin GroES (Jannaschia sp. (strain CCS1)).